A 276-amino-acid chain; its full sequence is Shikimate dehydrogenase (NADP(+)) (276 aa).

Shikimate is bound by residues 14–16 (SKS) and T61. K65 functions as the Proton acceptor in the catalytic mechanism. Residue D77 coordinates NADP(+). The shikimate site is built by N86 and D102. Residues 127 to 131 (GAGGA), 151 to 156 (NRTPDK), and M214 contribute to the NADP(+) site. Y216 is a shikimate binding site. G238 is an NADP(+) binding site.

This sequence belongs to the shikimate dehydrogenase family. Homodimer.

It catalyses the reaction shikimate + NADP(+) = 3-dehydroshikimate + NADPH + H(+). The protein operates within metabolic intermediate biosynthesis; chorismate biosynthesis; chorismate from D-erythrose 4-phosphate and phosphoenolpyruvate: step 4/7. In terms of biological role, involved in the biosynthesis of the chorismate, which leads to the biosynthesis of aromatic amino acids. Catalyzes the reversible NADPH linked reduction of 3-dehydroshikimate (DHSA) to yield shikimate (SA). The chain is Shikimate dehydrogenase (NADP(+)) from Nitrosomonas europaea (strain ATCC 19718 / CIP 103999 / KCTC 2705 / NBRC 14298).